Consider the following 654-residue polypeptide: RING finger protein 112 (654 aa).

An RING-type zinc finger spans residues 80–121; that stretch reads CSICLERLREPISLDCGHDFCIRCFSTHRIPGCELPCCPECR. Residues 154–654 are interaction with ZBTB16; it reads AVRAERLLLV…GDREPLLQEE (501 aa). Positions 189 to 420 constitute a GB1/RHD3-type G domain; it reads DTPVCLLAVL…YILDVLSTAP (232 aa). 340 to 341 serves as a coordination point for GTP; the sequence is RD. The next 2 helical transmembrane spans lie at 570–590 and 603–623; these read LAAV…GVVG and GMVA…GGGV.

This sequence belongs to the TRAFAC class dynamin-like GTPase superfamily. GB1/RHD3 GTPase family. GB1 subfamily. Self-associates. Interacts with SP1 in an oxidative stress-regulated manner. Interacts with SIGMAR1 in an oxidative stress-regulated manner. Interacts with ZBTB16 (via C2H2-type zinc finger domains 1 and 2). Post-translationally, auto-ubiquitinated. Expressed in most of the brain areas, including cortex, striatum, hippocampus, thalamus, and cerebellum (at protein level). Expressed in lateral amygdaloid nucleus, and ventromedial hypothalamus. Also expressed strongly in the marginal zone of brain vesicles, optic stalk, and cartilage primordium.

The protein resides in the membrane. It is found in the cytoplasm. The protein localises to the nucleus. Its subcellular location is the nuclear body. It localises to the nucleoplasm. The protein resides in the endosome. It is found in the cytoplasmic vesicle. The protein localises to the secretory vesicle. Its subcellular location is the synaptic vesicle. It localises to the postsynaptic density. The protein resides in the perikaryon. It is found in the cell projection. The protein localises to the neuron projection. The enzyme catalyses S-ubiquitinyl-[E2 ubiquitin-conjugating enzyme]-L-cysteine + [acceptor protein]-L-lysine = [E2 ubiquitin-conjugating enzyme]-L-cysteine + N(6)-ubiquitinyl-[acceptor protein]-L-lysine.. The protein operates within protein modification; protein ubiquitination. E3 ubiquitin-protein ligase that plays an important role in neuronal differentiation, including neurogenesis and gliogenesis, during brain development. During embryonic development initiates neuronal differentiation by inducing cell cycle arrest at the G0/G1 phase through up-regulation of cell-cycle regulatory proteins. Plays a role not only in the fetal period during the development of the nervous system, but also in the adult brain, where it is involved in the maintenance of neural functions and protection of the nervous tissue cells from oxidative stress-induced damage. Exhibits GTPase and E3 ubiquitin-protein ligase activities. Regulates dendritic spine density and synaptic neurotransmission; its ability to hydrolyze GTP is involved in the maintenance of dendritic spine density. The polypeptide is RING finger protein 112 (Rnf112) (Mus musculus (Mouse)).